The primary structure comprises 326 residues: Protease inhibitor (326 aa).

The signal sequence occupies residues 1–24 (MKTIRTGMMTLAALAVLGTNVVSA). Tandem repeats lie at residues 177–208 (IILHVDKETKITTADGKELKPEDLQLGMEVEA) and 272–304 (VALIVGKDTKIVSAKDNKELAPEDLKAEMKVFA). The interval 177–304 (IILHVDKETK…DLKAEMKVFA (128 aa)) is 2 X 32 AA approximate repeats.

Post-translationally, proteolytically cleaved to yield at least three forms (BBRPI-A, -B, and -C).

It is found in the secreted. Functionally, shows inhibitory activity towards serine proteases, such as trypsin, chymotrypsin and subtilisin. May form a trypsin-inhibitor complex in a molar ratio of 1:1. The polypeptide is Protease inhibitor (Brevibacillus choshinensis).